A 64-amino-acid chain; its full sequence is Large ribosomal subunit protein bL35 (64 aa).

Belongs to the bacterial ribosomal protein bL35 family.

In Shewanella frigidimarina (strain NCIMB 400), this protein is Large ribosomal subunit protein bL35.